The primary structure comprises 534 residues: Probable DNA ligase (534 aa).

Position 213 (E213) interacts with ATP. The active-site N6-AMP-lysine intermediate is K215. ATP-binding residues include R220, R235, E264, F303, R375, and K381.

It belongs to the ATP-dependent DNA ligase family. Mg(2+) serves as cofactor.

It catalyses the reaction ATP + (deoxyribonucleotide)n-3'-hydroxyl + 5'-phospho-(deoxyribonucleotide)m = (deoxyribonucleotide)n+m + AMP + diphosphate.. DNA ligase that seals nicks in double-stranded DNA during DNA replication, DNA recombination and DNA repair. The polypeptide is Probable DNA ligase (Mycolicibacterium vanbaalenii (strain DSM 7251 / JCM 13017 / BCRC 16820 / KCTC 9966 / NRRL B-24157 / PYR-1) (Mycobacterium vanbaalenii)).